Consider the following 615-residue polypeptide: Aspartokinase (615 aa).

Disordered stretches follow at residues Ala-84 to Thr-105 and Ser-127 to Gln-171. Low complexity-rich tracts occupy residues Ser-90–Gly-102 and Ser-127–Ser-164. The ACT domain maps to Ile-467–Ile-537.

The protein belongs to the aspartokinase family.

It carries out the reaction L-aspartate + ATP = 4-phospho-L-aspartate + ADP. It participates in amino-acid biosynthesis; L-methionine biosynthesis via de novo pathway; L-homoserine from L-aspartate: step 1/3. Its pathway is amino-acid biosynthesis; L-threonine biosynthesis; L-threonine from L-aspartate: step 1/5. In terms of biological role, phosphorylates aspartate, the first step in the biosynthesis of amino acids that derive from aspartate (the aspartate family of amino acids), including methioinine and threonine, the latter of which is a precursor to isoleucine. The protein is Aspartokinase of Cryptococcus neoformans var. grubii serotype A (strain H99 / ATCC 208821 / CBS 10515 / FGSC 9487) (Filobasidiella neoformans var. grubii).